We begin with the raw amino-acid sequence, 831 residues long: Protein ADP-ribosyltransferase PARP3 (831 aa).

The disordered stretch occupies residues 1-69 (MVHETRSRTL…KKLKAEESDL (69 aa)). 2 stretches are compositionally biased toward basic and acidic residues: residues 15-32 (EEGK…KEQE) and 43-66 (KTAD…KAEE). The PADR1 zinc-binding domain maps to 49 to 199 (EHDGEQEPSK…NKYPKRNLDD (151 aa)). A zinc ribbon region spans residues 124–168 (GPLDKCPVCGGQLECKGLKYNCTGTHSEWACCSFSTNNPSRRGGP). Residues C129, C132, C145, and C155 each coordinate Zn(2+). Residues 200–290 (EGIFSGMMIA…EKQPLAAYDI (91 aa)) enclose the BRCT domain. The 102-residue stretch at 338–439 (GGHIYEKDGI…KKFKKKCMKM (102 aa)) folds into the WGR domain. A PARP alpha-helical domain is found at 466–585 (HCKLDPSVTF…DINVASRLIG (120 aa)). Residues 594-827 (DPLSQCYKKL…VKYEEQNMEV (234 aa)) enclose the PARP catalytic domain.

This sequence belongs to the ARTD/PARP family.

Its subcellular location is the nucleus. The enzyme catalyses L-aspartyl-[protein] + NAD(+) = 4-O-(ADP-D-ribosyl)-L-aspartyl-[protein] + nicotinamide. It catalyses the reaction L-glutamyl-[protein] + NAD(+) = 5-O-(ADP-D-ribosyl)-L-glutamyl-[protein] + nicotinamide. Functionally, involved in the base excision repair (BER) pathway, by catalyzing the poly(ADP-ribosyl)ation of a limited number of acceptor proteins involved in chromatin architecture and in DNA metabolism. This modification follows DNA damages and appears as an obligatory step in a detection/signaling pathway leading to the reparation of DNA strand breaks. The protein is Protein ADP-ribosyltransferase PARP3 (PARP3) of Oryza sativa subsp. japonica (Rice).